Consider the following 723-residue polypeptide: ATP-dependent zinc metalloprotease YME1 homolog (723 aa).

The chain crosses the membrane as a helical span at residues 198 to 220 (LTRFYIFLVFCIFFGYLTGRIRV). 288-295 (GPPGTGKT) provides a ligand contact to ATP. His-509 is a binding site for Zn(2+). Residue Glu-510 is part of the active site. Residues His-513 and Asp-587 each coordinate Zn(2+).

It in the N-terminal section; belongs to the AAA ATPase family. The protein in the C-terminal section; belongs to the peptidase M41 family. The cofactor is Zn(2+).

The protein resides in the mitochondrion inner membrane. It is found in the mitochondrion. Functionally, ATP-dependent metalloprotease that catalyzes the degradation of folded and unfolded proteins with a suitable degron sequence in the mitochondrial intermembrane region. Plays an important role in regulating mitochondrial morphology and function. This Caenorhabditis elegans protein is ATP-dependent zinc metalloprotease YME1 homolog (ymel-1).